An 884-amino-acid chain; its full sequence is Chitin synthase E (884 aa).

Disordered regions lie at residues 1–58 (MGTP…PAVS) and 73–108 (AVFAAPPYQESEAASENTFRARSNGDKASREGSRAG). Polar residues-rich tracts occupy residues 37 to 48 (QSLLERNNSSHY) and 84 to 93 (EAASENTFRA). Asn-44 carries N-linked (GlcNAc...) asparagine glycosylation. A compositionally biased stretch (basic and acidic residues) spans 95–105 (SNGDKASREGS). Residue Asn-301 is glycosylated (N-linked (GlcNAc...) asparagine). The next 7 membrane-spanning stretches (helical) occupy residues 513 to 532 (WLNGSFAAGLYAIMHFGRIY), 556 to 576 (IMTWFSLASYWLTSSVIMDLV), 597 to 617 (IVNNFVKYGYVWVLTLQFIMA), 635 to 655 (YFSLVQLYVLILSFYLVVGAF), 681 to 701 (GGIVLIALVSTYGIYIIASVL), 708 to 728 (IITSSWAYFLGMTTSINILMV), and 812 to 832 (VLVCLWVFSNLLVTLLITATG). Asn-840 carries N-linked (GlcNAc...) asparagine glycosylation. Residues 852 to 872 (VILWITAGLSLFRFIGSLWFL) form a helical membrane-spanning segment.

This sequence belongs to the chitin synthase family. Class III subfamily.

It is found in the cell membrane. It catalyses the reaction [(1-&gt;4)-N-acetyl-beta-D-glucosaminyl](n) + UDP-N-acetyl-alpha-D-glucosamine = [(1-&gt;4)-N-acetyl-beta-D-glucosaminyl](n+1) + UDP + H(+). In terms of biological role, polymerizes chitin, a structural polymer of the cell wall and septum, by transferring the sugar moiety of UDP-GlcNAc to the non-reducing end of the growing chitin polymer. Plays an important role in septal growth or maintenance. Mediates colony spore formation. ChsE and chsD seem to play a functionally redundant role in lateral cell wall chitin synthesis. Involved in resistance to echinocandins. This chain is Chitin synthase E, found in Aspergillus niger (strain ATCC MYA-4892 / CBS 513.88 / FGSC A1513).